The following is a 274-amino-acid chain: MSRPILVFDSGIGGLSVLAEIRKSLPHSDYCYLFDNARLPYGELEEQVLIAGCVALVCDLVARTNAMIVVVACNTASTVVLPALRANLSIPVVGVVPAIKPAAQMSKSKRIGLLATPGTVKRHYTHSLISQFADDCHVELFGCSELVMMAEQKIATGEMDMHRLADLLAPVVAAQLDVLVLGCTHFPMIQAELQQVLGAGVTLMDSGAAIAKRVVTLLTQQNFIVEQRRVTNEREAVGESAMQAFYTKAEISEGLTTTLIDCGFSTIERITTTN.

Substrate is bound by residues 9–10 and 41–42; these read DS and YG. C73 (proton donor/acceptor) is an active-site residue. 74-75 contributes to the substrate binding site; the sequence is NT. C183 acts as the Proton donor/acceptor in catalysis. 184–185 serves as a coordination point for substrate; that stretch reads TH.

The protein belongs to the aspartate/glutamate racemases family.

It carries out the reaction L-glutamate = D-glutamate. It functions in the pathway cell wall biogenesis; peptidoglycan biosynthesis. Its function is as follows. Provides the (R)-glutamate required for cell wall biosynthesis. The sequence is that of Glutamate racemase from Shewanella baltica (strain OS223).